The chain runs to 195 residues: MPYGTRYPTLAFHTGGIGESDDGMPPQPFETFCYDSALLQAKIENFNIVPYTSVLPKELFGNIVPVDQCIKFFKHGAVLEVIMAGRGASTSDGTHAIATGVGICWGQDKNGELIGGWAAEYVEFFPTWINDEIAESHAKMWLKKSLQHELDLRSVVKHSEFQYFHNYINIKQKYGFSLTALGFLNFENADPATIK.

Position 53 is a pyruvic acid (Ser) (serine 53).

This sequence belongs to the pyruvoyl-dependent arginine decarboxylase family. As to quaternary structure, trimer of an alpha-beta dimer. Pyruvate serves as cofactor.

The protein localises to the cytoplasm. It carries out the reaction L-arginine + H(+) = agmatine + CO2. Part of the AaxABC system, catalyzes the decarboxylation of L-arginine. The arginine uptake by the bacterium in the macrophage may be a virulence factor against the host innate immune response. This chain is Pyruvoyl-dependent arginine decarboxylase AaxB (aaxB), found in Chlamydia caviae (strain ATCC VR-813 / DSM 19441 / 03DC25 / GPIC) (Chlamydophila caviae).